A 264-amino-acid chain; its full sequence is Indole-3-glycerol phosphate synthase (264 aa).

It belongs to the TrpC family.

It carries out the reaction 1-(2-carboxyphenylamino)-1-deoxy-D-ribulose 5-phosphate + H(+) = (1S,2R)-1-C-(indol-3-yl)glycerol 3-phosphate + CO2 + H2O. Its pathway is amino-acid biosynthesis; L-tryptophan biosynthesis; L-tryptophan from chorismate: step 4/5. The protein is Indole-3-glycerol phosphate synthase of Stenotrophomonas maltophilia (strain K279a).